We begin with the raw amino-acid sequence, 247 residues long: Protein-L-isoaspartate O-methyltransferase 2 (247 aa).

S97 is an active-site residue.

The protein belongs to the methyltransferase superfamily. L-isoaspartyl/D-aspartyl protein methyltransferase family.

It localises to the cytoplasm. The catalysed reaction is [protein]-L-isoaspartate + S-adenosyl-L-methionine = [protein]-L-isoaspartate alpha-methyl ester + S-adenosyl-L-homocysteine. In terms of biological role, catalyzes the methyl esterification of L-isoaspartyl residues in peptides and proteins that result from spontaneous decomposition of normal L-aspartyl and L-asparaginyl residues. It plays a role in the repair and/or degradation of damaged proteins. In Syntrophobacter fumaroxidans (strain DSM 10017 / MPOB), this protein is Protein-L-isoaspartate O-methyltransferase 2.